Reading from the N-terminus, the 132-residue chain is Small ribosomal subunit protein uS8c (132 aa).

Belongs to the universal ribosomal protein uS8 family. As to quaternary structure, part of the 30S ribosomal subunit.

It localises to the plastid. The protein localises to the chloroplast. One of the primary rRNA binding proteins, it binds directly to 16S rRNA central domain where it helps coordinate assembly of the platform of the 30S subunit. The sequence is that of Small ribosomal subunit protein uS8c (rps8) from Psilotum nudum (Whisk fern).